A 296-amino-acid chain; its full sequence is Haloalkane dehalogenase (296 aa).

One can recognise an AB hydrolase-1 domain in the interval proline 31–arginine 155. The Nucleophile role is filled by aspartate 108. Catalysis depends on glutamate 132, which acts as the Proton donor. The Proton acceptor role is filled by histidine 272.

It belongs to the haloalkane dehalogenase family. Type 2 subfamily. Monomer.

The protein localises to the periplasm. It catalyses the reaction 1-haloalkane + H2O = a halide anion + a primary alcohol + H(+). The enzyme catalyses (3R,6R)-1,3,4,6-tetrachlorocyclohexa-1,4-diene + 2 H2O = 2,5-dichlorocyclohexa-2,5-dien-1,4-diol + 2 chloride + 2 H(+). Its pathway is xenobiotic degradation; gamma-hexachlorocyclohexane degradation. In terms of biological role, catalyzes hydrolytic cleavage of carbon-halogen bonds in halogenated aliphatic compounds, leading to the formation of the corresponding primary alcohols, halide ions and protons. Is involved in the degradation of the important environmental pollutant gamma-hexachlorocyclohexane (gamma-HCH or lindane) as it also catalyzes conversion of 1,3,4,6-tetrachloro-1,4-cyclohexadiene (1,4-TCDN) to 2,5-dichloro-2,5-cyclohexadiene-1,4-diol (2,5-DDOL) via the intermediate 2,4,5-trichloro-2,5-cyclohexadiene-1-ol (2,4,5-DNOL). The polypeptide is Haloalkane dehalogenase (Sphingobium indicum (strain DSM 16412 / CCM 7286 / MTCC 6364 / B90A)).